We begin with the raw amino-acid sequence, 879 residues long: Phosphoenolpyruvate carboxylase (879 aa).

Catalysis depends on residues His138 and Lys546.

The protein belongs to the PEPCase type 1 family. Mg(2+) serves as cofactor.

It carries out the reaction oxaloacetate + phosphate = phosphoenolpyruvate + hydrogencarbonate. Its function is as follows. Forms oxaloacetate, a four-carbon dicarboxylic acid source for the tricarboxylic acid cycle. This Pectobacterium atrosepticum (strain SCRI 1043 / ATCC BAA-672) (Erwinia carotovora subsp. atroseptica) protein is Phosphoenolpyruvate carboxylase.